The chain runs to 408 residues: Serine/threonine transporter SstT (408 aa).

The next 9 membrane-spanning stretches (helical) occupy residues 19-39 (SLVSQIIVAIILASLLAVISP), 48-68 (LGSLFVNALKAVAPILVLVLV), 86-106 (IVGLYFLGTLSAALVAVLLSF), 143-163 (VTAVASGNFIAVLAWGLGLGF), 193-213 (FAPLGIFGLVANTIATTGFSA), 223-243 (VLLSAMLIIALLVNPLIVFII), 294-314 (IPLGATINMAGAAITITVLTL), 322-342 (IEVSFATAILLSVVASISACG), and 367-387 (VAMQVVAIGFIIGVIQDSAET).

This sequence belongs to the dicarboxylate/amino acid:cation symporter (DAACS) (TC 2.A.23) family.

Its subcellular location is the cell inner membrane. It catalyses the reaction L-serine(in) + Na(+)(in) = L-serine(out) + Na(+)(out). It carries out the reaction L-threonine(in) + Na(+)(in) = L-threonine(out) + Na(+)(out). Functionally, involved in the import of serine and threonine into the cell, with the concomitant import of sodium (symport system). The sequence is that of Serine/threonine transporter SstT from Colwellia psychrerythraea (strain 34H / ATCC BAA-681) (Vibrio psychroerythus).